The sequence spans 159 residues: Large ribosomal subunit protein uL11 (159 aa).

Positions 1–26 (MAGTIEVLVPGGKANPGPPLGPELGP) are disordered.

The protein belongs to the universal ribosomal protein uL11 family. Part of the ribosomal stalk of the 50S ribosomal subunit. Interacts with L10 and the large rRNA to form the base of the stalk. L10 forms an elongated spine to which L12 dimers bind in a sequential fashion forming a multimeric L10(L12)X complex.

Functionally, forms part of the ribosomal stalk which helps the ribosome interact with GTP-bound translation factors. The protein is Large ribosomal subunit protein uL11 of Haloferax volcanii (strain ATCC 29605 / DSM 3757 / JCM 8879 / NBRC 14742 / NCIMB 2012 / VKM B-1768 / DS2) (Halobacterium volcanii).